The sequence spans 575 residues: Transcription factor COE2 (575 aa).

The interval 62–65 is interaction with DNA; that stretch reads RKSN. The segment at 150–169 adopts a C5-type zinc-finger fold; sequence CRVLLTHEVMCSRCCEKKSC. 2 interaction with DNA regions span residues 196 to 203 and 235 to 238; these read NCLKTAGN and NNSK. The 84-residue stretch at 253–336 folds into the IPT/TIG domain; sequence PCIKAISPSE…KGAPGRFIYT (84 aa). A compositionally biased stretch (polar residues) spans 441–453; it reads STQGNNQGYIRNT. The tract at residues 441–479 is disordered; the sequence is STQGNNQGYIRNTSSISPRGYSSSSTPQQSNYSTSSNSM. Positions 454-479 are enriched in low complexity; the sequence is SSISPRGYSSSSTPQQSNYSTSSNSM.

The protein belongs to the COE family. In terms of assembly, forms either a homodimer or a heterodimer with a related family member. Interacts with SIX1.

It is found in the nucleus. Transcription factor that, in osteoblasts, activates the decoy receptor for RANKL, TNFRSF11B, which in turn regulates osteoclast differentiation. Acts in synergy with the Wnt-responsive LEF1/CTNNB1 pathway. Recognizes variations of the palindromic sequence 5'-ATTCCCNNGGGAATT-3'. The sequence is that of Transcription factor COE2 (EBF2) from Homo sapiens (Human).